An 802-amino-acid polypeptide reads, in one-letter code: Copper-exporting P-type ATPase (802 aa).

2 consecutive HMA domains span residues 5-70 (KKTT…YGVA) and 72-138 (ETVE…YDAS). The Cu(+) site is built by cysteine 16, cysteine 19, cysteine 83, and cysteine 86. Helical transmembrane passes span 161-181 (LIISAVLSLPLLMLMFVHLFN), 192-212 (WFQFILATPVQFIIGWQFYVG), 224-244 (MDVLVAVGTSAAYFYSIYEMV), 256-276 (LYFETSAVLITLILFGKYLEA), 411-431 (YFVPIVVGIALLTFIVWITLV), and 438-458 (PALVASISVLVIACPCALGLA). Aspartate 495 acts as the 4-aspartylphosphate intermediate in catalysis. Mg(2+) contacts are provided by aspartate 690 and aspartate 694. The next 2 membrane-spanning stretches (helical) occupy residues 748 to 767 (LFWAFGYNIAGIPIAALGLL) and 771 to 790 (VAGAAMALSSVSVVTNALRL).

It belongs to the cation transport ATPase (P-type) (TC 3.A.3) family. Type IB subfamily.

It localises to the cell membrane. The enzyme catalyses Cu(+)(in) + ATP + H2O = Cu(+)(out) + ADP + phosphate + H(+). In terms of biological role, involved in copper export. This is Copper-exporting P-type ATPase (copA) from Staphylococcus aureus (strain MRSA252).